The following is a 182-amino-acid chain: UPF0397 protein BA_2640/GBAA_2640/BAS2460 (182 aa).

5 consecutive transmembrane segments (helical) span residues 9–29 (VVAI…GFSI), 40–60 (AILT…IGLI), 71–91 (WSIW…MGFI), 114–134 (ITGL…DIIV), and 142–162 (IVIQ…VLGL).

The protein belongs to the UPF0397 family.

The protein localises to the cell membrane. In Bacillus anthracis, this protein is UPF0397 protein BA_2640/GBAA_2640/BAS2460.